Reading from the N-terminus, the 116-residue chain is MYEQAIVIRNDLKMGKGKMAAQACHASIQAFLHAQKISSSAVSGWMNEGQKKVVLKVNSEKELLEIFKNVNIEGLPCSLIRDAGRTQIEPGSLTAVGIGPEKEEKISKVKKDLKLL.

This sequence belongs to the PTH2 family.

The protein localises to the cytoplasm. It catalyses the reaction an N-acyl-L-alpha-aminoacyl-tRNA + H2O = an N-acyl-L-amino acid + a tRNA + H(+). In terms of biological role, the natural substrate for this enzyme may be peptidyl-tRNAs which drop off the ribosome during protein synthesis. The chain is Peptidyl-tRNA hydrolase (pth) from Methanococcus maripaludis (strain DSM 14266 / JCM 13030 / NBRC 101832 / S2 / LL).